Consider the following 326-residue polypeptide: Probable cell division protein WhiA (326 aa).

The H-T-H motif DNA-binding region spans 275-308 (SLDELGRLADPPMTKDAIAGRIRRLLAMADKRAL).

It belongs to the WhiA family.

In terms of biological role, involved in cell division and chromosome segregation. This is Probable cell division protein WhiA from Paenarthrobacter aurescens (strain TC1).